Here is a 727-residue protein sequence, read N- to C-terminus: C-terminal-binding protein 1 (727 aa).

A THAP-type zinc finger spans residues 5–60 (CGFPNCKFRSRYRGLEDNRHFYRIPKRPLILRQRWLTAIGRTEETVVSQLRICSAH). A disordered region spans residues 64 to 158 (GEKKEGDIPV…HPPVLPDPQQ (95 aa)). Residues 77–94 (TVDKQIKIELPPKESKNS) show a composition bias toward basic and acidic residues. Residues tyrosine 251, 331–336 (LGCGRV), aspartate 355, 388–394 (CNLGDET), 415–417 (TSH), aspartate 441, and 467–470 (HSAW) each bind NAD(+). Residues 587 to 613 (ANAQRGSPANRSSRSSPSPHTNKSSVS) show a composition bias toward low complexity. 2 disordered regions span residues 587-629 (ANAQ…SPAA) and 652-681 (APNGDSGASTADSGIEGGDKEKVQSDGDEN).

Belongs to the D-isomer specific 2-hydroxyacid dehydrogenase family. In terms of assembly, homodimer.

Functionally, binds DNA and represses gene expression. Plays a role in regulation of life span, possibly by regulating transcription of genes important for lipid metabolism. In Caenorhabditis elegans, this protein is C-terminal-binding protein 1.